An 807-amino-acid polypeptide reads, in one-letter code: Phenylalanine--tRNA ligase beta subunit (807 aa).

Positions 39-153 constitute a tRNA-binding domain; it reads SARSQGVVVG…EIPAVGTPVA (115 aa). Residues 407-491 enclose the B5 domain; sequence RTPVPLQLRR…RLVGFDKFGS (85 aa). Residues Asp-469, Asp-475, Glu-478, and Glu-479 each contribute to the Mg(2+) site. Residues 713–806 enclose the FDX-ACB domain; the sequence is PTVPASERDL…LSKQFKAELR (94 aa).

This sequence belongs to the phenylalanyl-tRNA synthetase beta subunit family. Type 1 subfamily. As to quaternary structure, tetramer of two alpha and two beta subunits. The cofactor is Mg(2+).

It is found in the cytoplasm. It catalyses the reaction tRNA(Phe) + L-phenylalanine + ATP = L-phenylalanyl-tRNA(Phe) + AMP + diphosphate + H(+). This Synechococcus sp. (strain CC9902) protein is Phenylalanine--tRNA ligase beta subunit.